Consider the following 82-residue polypeptide: Progonadoliberin-3 (82 aa).

The N-terminal stretch at 1-23 (MDLSNRTVVQVVVLALVAQVTLS) is a signal peptide. Pyrrolidone carboxylic acid is present on Gln-24. Gly-33 carries the post-translational modification Glycine amide.

This sequence belongs to the GnRH family.

The protein resides in the secreted. Stimulates the secretion of gonadotropins. The polypeptide is Progonadoliberin-3 (gnrh3) (Salmo trutta (Brown trout)).